The chain runs to 204 residues: Lymphotoxin-alpha (204 aa).

The signal sequence occupies residues 1-33 (MTPPGRLYLLRVCSTPPLLLLGLLLALPLEAQG). The THD domain maps to 62–204 (PAAHLVGDPS…SSVFFGAFAL (143 aa)). Residue Asn95 is glycosylated (N-linked (GlcNAc...) asparagine). A disulfide bond links Cys119 and Cys155.

Belongs to the tumor necrosis factor family. Homotrimer, and heterotrimer of either two LTB and one LTA subunits or (less prevalent) two LTA and one LTB subunits. Interacts with TNFRSF14.

The protein resides in the secreted. It localises to the membrane. Cytokine that in its homotrimeric form binds to TNFRSF1A/TNFR1, TNFRSF1B/TNFBR and TNFRSF14/HVEM. In its heterotrimeric form with LTB binds to TNFRSF3/LTBR. Lymphotoxin is produced by lymphocytes and is cytotoxic for a wide range of tumor cells in vitro and in vivo. This chain is Lymphotoxin-alpha (LTA), found in Bos taurus (Bovine).